We begin with the raw amino-acid sequence, 901 residues long: Probable inorganic carbon transporter subunit DabA (901 aa).

Zn(2+) contacts are provided by Cys424, Asp426, His606, and Cys621.

It belongs to the inorganic carbon transporter (TC 9.A.2) DabA family. In terms of assembly, forms a complex with DabB. Requires Zn(2+) as cofactor.

The protein localises to the cell membrane. Part of an energy-coupled inorganic carbon pump. This Staphylococcus aureus (strain bovine RF122 / ET3-1) protein is Probable inorganic carbon transporter subunit DabA.